The primary structure comprises 444 residues: Adenylosuccinate lyase (444 aa).

Residues 9-10 (RY), 73-75 (KHD), and 97-98 (TS) contribute to the N(6)-(1,2-dicarboxyethyl)-AMP site. The active-site Proton donor/acceptor is the His-145. Gln-219 lines the N(6)-(1,2-dicarboxyethyl)-AMP pocket. Ser-269 functions as the Proton donor/acceptor in the catalytic mechanism. N(6)-(1,2-dicarboxyethyl)-AMP contacts are provided by residues Ser-270, 275 to 277 (KRN), Asn-283, and 314 to 318 (SAERI).

Belongs to the lyase 1 family. Adenylosuccinate lyase subfamily. In terms of assembly, homotetramer. Residues from neighboring subunits contribute catalytic and substrate-binding residues to each active site.

It catalyses the reaction N(6)-(1,2-dicarboxyethyl)-AMP = fumarate + AMP. It carries out the reaction (2S)-2-[5-amino-1-(5-phospho-beta-D-ribosyl)imidazole-4-carboxamido]succinate = 5-amino-1-(5-phospho-beta-D-ribosyl)imidazole-4-carboxamide + fumarate. It functions in the pathway purine metabolism; AMP biosynthesis via de novo pathway; AMP from IMP: step 2/2. The protein operates within purine metabolism; IMP biosynthesis via de novo pathway; 5-amino-1-(5-phospho-D-ribosyl)imidazole-4-carboxamide from 5-amino-1-(5-phospho-D-ribosyl)imidazole-4-carboxylate: step 2/2. Its function is as follows. Catalyzes two reactions in de novo purine nucleotide biosynthesis. Catalyzes the breakdown of 5-aminoimidazole- (N-succinylocarboxamide) ribotide (SAICAR or 2-[5-amino-1-(5-phospho-beta-D-ribosyl)imidazole-4-carboxamido]succinate) to 5-aminoimidazole-4-carboxamide ribotide (AICAR or 5-amino-1-(5-phospho-beta-D-ribosyl)imidazole-4-carboxamide) and fumarate, and of adenylosuccinate (ADS or N(6)-(1,2-dicarboxyethyl)-AMP) to adenosine monophosphate (AMP) and fumarate. In Archaeoglobus fulgidus (strain ATCC 49558 / DSM 4304 / JCM 9628 / NBRC 100126 / VC-16), this protein is Adenylosuccinate lyase (purB).